Reading from the N-terminus, the 337-residue chain is Neurogenic differentiation factor 6 (337 aa).

The segment at 28–80 (QKQIKKPESFPKQVVLRGKSIKRAPGEETEKEEEEEDREEEDENGLSRRRGLR) is disordered. Positions 54–71 (EETEKEEEEEDREEEDEN) are enriched in acidic residues. The Nuclear localization signal signature appears at 80–86 (RKKKTTK). The region spanning 94–146 (FRRQEANARERNRMHGLNDALDNLRKVVPCYSKTQKLSKIETLRLAKNYIWAL) is the bHLH domain.

In terms of assembly, efficient DNA binding requires dimerization with another bHLH protein. In terms of tissue distribution, specific to the nervous system of both embryos and adults. Highest levels in the cortical plate of the cerebrum.

It is found in the nucleus. Activates E box-dependent transcription in collaboration with TCF3/E47. May be a trans-acting factor involved in the development and maintenance of the mammalian nervous system. Transactivates the promoter of its own gene. The sequence is that of Neurogenic differentiation factor 6 (Neurod6) from Mus musculus (Mouse).